The chain runs to 245 residues: DNA polymerase III subunit epsilon (245 aa).

The a divalent metal cation site is built by Asp-11 and Glu-13. Substrate is bound by residues Asp-11, Glu-13, Gln-60, and His-65. His-161 acts as the Proton acceptor in catalysis. A divalent metal cation is bound at residue Asp-166. Asp-166 contributes to the substrate binding site.

In terms of assembly, the DNA polymerase holoenzyme is a complex that contains 10 different types of subunits. These subunits are organized into 3 functionally essential subassemblies: the pol III core, the beta sliding clamp processivity factor and the clamp-loading complex. The pol III core (subunits alpha,epsilon and theta) contains the polymerase and the 3'-5' exonuclease proofreading activities. The polymerase is tethered to the template via the sliding clamp processivity factor. The clamp-loading complex assembles the beta processivity factor onto the primer template and plays a central role in the organization and communication at the replication fork. This complex contains delta, delta', psi and chi, and copies of either or both of two different DnaX proteins, gamma and tau. The composition of the holoenzyme is, therefore: (alpha,epsilon,theta)[2]-(gamma/tau)[3]-delta,delta', psi,chi-beta[4]. Mg(2+) is required as a cofactor. The cofactor is Mn(2+).

The enzyme catalyses DNA(n) + a 2'-deoxyribonucleoside 5'-triphosphate = DNA(n+1) + diphosphate. Functionally, DNA polymerase III is a complex, multichain enzyme responsible for most of the replicative synthesis in bacteria. The epsilon subunit contain the editing function and is a proofreading 3'-5' exonuclease. The polypeptide is DNA polymerase III subunit epsilon (dnaQ) (Buchnera aphidicola subsp. Baizongia pistaciae (strain Bp)).